The chain runs to 1128 residues: Translation initiation factor IF-2 (1128 aa).

Residues 57–519 (NSDKQILSIN…KETTRQRQKR (463 aa)) form a disordered region. Positions 70 to 83 (NKKDNYKQNKEDKS) are enriched in basic and acidic residues. The segment covering 100 to 110 (KKQLLNKPLNK) has biased composition (low complexity). The span at 120 to 146 (QLKNPNKPNIYNSSQSQANLTNQNTKS) shows a compositional bias: polar residues. The span at 147 to 158 (KPSEHFNKDKKT) shows a compositional bias: basic and acidic residues. Residues 182 to 196 (KNINNNLKSNESSKN) show a composition bias toward low complexity. The segment covering 201-214 (GDKRELSLKPDQNR) has biased composition (basic and acidic residues). 2 stretches are compositionally biased toward polar residues: residues 243–267 (KQNN…NRPG) and 386–397 (AKTNNQKQNIES). Residues 432-445 (RKDWDDSAKLEALR) show a composition bias toward basic and acidic residues. Over residues 499 to 519 (HKSTKQFKKKKKETTRQRQKR) the composition is skewed to basic residues. One can recognise a tr-type G domain in the interval 620–792 (KRPPVITVMG…ILLVSEVEDL (173 aa)). The segment at 629–636 (GHVDHGKT) is G1. 629-636 (GHVDHGKT) is a GTP binding site. The segment at 654-658 (GITQH) is G2. The interval 679–682 (DTPG) is G3. Residues 679–683 (DTPGH) and 733–736 (NKID) each bind GTP. The segment at 733–736 (NKID) is G4. The G5 stretch occupies residues 769–771 (SAI).

It belongs to the TRAFAC class translation factor GTPase superfamily. Classic translation factor GTPase family. IF-2 subfamily.

The protein resides in the cytoplasm. Its function is as follows. One of the essential components for the initiation of protein synthesis. Protects formylmethionyl-tRNA from spontaneous hydrolysis and promotes its binding to the 30S ribosomal subunits. Also involved in the hydrolysis of GTP during the formation of the 70S ribosomal complex. The protein is Translation initiation factor IF-2 of Prochlorococcus marinus (strain MIT 9312).